The primary structure comprises 396 residues: 1-deoxy-D-xylulose 5-phosphate reductoisomerase (396 aa).

Residues threonine 10, glycine 11, serine 12, isoleucine 13, asparagine 38, and asparagine 123 each coordinate NADPH. Lysine 124 provides a ligand contact to 1-deoxy-D-xylulose 5-phosphate. Position 125 (glutamate 125) interacts with NADPH. A Mn(2+)-binding site is contributed by aspartate 149. 1-deoxy-D-xylulose 5-phosphate contacts are provided by serine 150, glutamate 151, serine 185, and histidine 208. Residue glutamate 151 participates in Mn(2+) binding. Glycine 214 is a binding site for NADPH. Residues serine 221, asparagine 226, lysine 227, and glutamate 230 each contribute to the 1-deoxy-D-xylulose 5-phosphate site. Glutamate 230 contributes to the Mn(2+) binding site.

This sequence belongs to the DXR family. Mg(2+) serves as cofactor. The cofactor is Mn(2+).

The catalysed reaction is 2-C-methyl-D-erythritol 4-phosphate + NADP(+) = 1-deoxy-D-xylulose 5-phosphate + NADPH + H(+). It functions in the pathway isoprenoid biosynthesis; isopentenyl diphosphate biosynthesis via DXP pathway; isopentenyl diphosphate from 1-deoxy-D-xylulose 5-phosphate: step 1/6. In terms of biological role, catalyzes the NADPH-dependent rearrangement and reduction of 1-deoxy-D-xylulose-5-phosphate (DXP) to 2-C-methyl-D-erythritol 4-phosphate (MEP). The protein is 1-deoxy-D-xylulose 5-phosphate reductoisomerase of Shewanella piezotolerans (strain WP3 / JCM 13877).